The sequence spans 215 residues: Peptide methionine sulfoxide reductase MsrA (215 aa).

The active site involves Cys-58.

It belongs to the MsrA Met sulfoxide reductase family.

The catalysed reaction is L-methionyl-[protein] + [thioredoxin]-disulfide + H2O = L-methionyl-(S)-S-oxide-[protein] + [thioredoxin]-dithiol. It carries out the reaction [thioredoxin]-disulfide + L-methionine + H2O = L-methionine (S)-S-oxide + [thioredoxin]-dithiol. Functionally, has an important function as a repair enzyme for proteins that have been inactivated by oxidation. Catalyzes the reversible oxidation-reduction of methionine sulfoxide in proteins to methionine. The chain is Peptide methionine sulfoxide reductase MsrA from Pseudomonas savastanoi pv. phaseolicola (strain 1448A / Race 6) (Pseudomonas syringae pv. phaseolicola (strain 1448A / Race 6)).